A 443-amino-acid chain; its full sequence is Maintenance of mitochondrial morphology protein 1 (443 aa).

At 1 to 80 (MADLETSDLS…PSNTWSFTQG (80 aa)) the chain is on the lumenal side. Residues 81–101 (LIVGQLSVVFVIVIFIKFFVF) traverse the membrane as a helical segment. Residues 102–443 (AESSPALAKS…NGDKVEDGSN (342 aa)) lie on the Cytoplasmic side of the membrane. 2 disordered regions span residues 126-146 (KKDQSSSDDADPDDDSETTAS) and 304-358 (LSAH…NDGT). Residues 131-142 (SSDDADPDDDSE) are compositionally biased toward acidic residues. The SMP-LTD domain maps to 165-417 (SPESLDWFNV…EPRFQVVRLP (253 aa)).

It belongs to the MMM1 family. In terms of assembly, homodimer. Component of the ER-mitochondria encounter structure (ERMES) or MDM complex, composed of MMM1, MDM10, MDM12 and MDM34. An MMM1 homodimer associates with one molecule of MDM12 on each side in a pairwise head-to-tail manner, and the SMP-LTD domains of MMM1 and MDM12 generate a continuous hydrophobic tunnel for phospholipid trafficking.

The protein localises to the endoplasmic reticulum membrane. Component of the ERMES/MDM complex, which serves as a molecular tether to connect the endoplasmic reticulum (ER) and mitochondria. Components of this complex are involved in the control of mitochondrial shape and protein biogenesis, and function in nonvesicular lipid trafficking between the ER and mitochondria. The MDM12-MMM1 subcomplex functions in the major beta-barrel assembly pathway that is responsible for biogenesis of all outer membrane beta-barrel proteins, and acts in a late step after the SAM complex. The MDM10-MDM12-MMM1 subcomplex further acts in the TOM40-specific pathway after the action of the MDM12-MMM1 complex. Essential for establishing and maintaining the structure of mitochondria and maintenance of mtDNA nucleoids. The chain is Maintenance of mitochondrial morphology protein 1 from Scheffersomyces stipitis (strain ATCC 58785 / CBS 6054 / NBRC 10063 / NRRL Y-11545) (Yeast).